Here is a 670-residue protein sequence, read N- to C-terminus: Penicillin-binding protein activator LpoA (670 aa).

Positions 1–26 (MLPSKVVHRKAVRTVPLLLAALIFAG) are cleaved as a signal peptide. The N-palmitoyl cysteine moiety is linked to residue C27. The S-diacylglycerol cysteine moiety is linked to residue C27.

It belongs to the LpoA family. As to quaternary structure, interacts with PBP1a.

It is found in the cell outer membrane. In terms of biological role, regulator of peptidoglycan synthesis that is essential for the function of penicillin-binding protein 1A (PBP1a). This Erwinia tasmaniensis (strain DSM 17950 / CFBP 7177 / CIP 109463 / NCPPB 4357 / Et1/99) protein is Penicillin-binding protein activator LpoA.